We begin with the raw amino-acid sequence, 288 residues long: MLIIKKSSELTCVIKNLKKKNKSKIALIPTMGNLHRGHLELIKIGKLKSNILIISIFINPAQFSNSKDFRNYPKTLNEDIKKLIEYKVDILFCPTLKSMYPFGYKNHTLVNVVQYSSILDGKTMSNHFIGVATIISKLFNLINPDIAIFGQKDFQQLIMIRQLVLHMNYNIKILSAPIIRCFDGLALSSRNRHLSLEERKKAPKIYNILLELSKKIKLNKLYNLKKDYDAILKNYLIKLNNYGFKVEVLSIRNAKNLMPIDENSKQAVILCSAKIGSIRLVDNIKIKL.

ATP is bound at residue 31-38 (MGNLHRGH). Residue His38 is the Proton donor of the active site. Position 62 (Gln62) interacts with (R)-pantoate. Gln62 is a binding site for beta-alanine. An ATP-binding site is contributed by 150-153 (GQKD). A (R)-pantoate-binding site is contributed by Gln156. Residues Ile179 and 187–190 (LSSR) each bind ATP.

The protein belongs to the pantothenate synthetase family. As to quaternary structure, homodimer.

The protein resides in the cytoplasm. It carries out the reaction (R)-pantoate + beta-alanine + ATP = (R)-pantothenate + AMP + diphosphate + H(+). Its pathway is cofactor biosynthesis; (R)-pantothenate biosynthesis; (R)-pantothenate from (R)-pantoate and beta-alanine: step 1/1. Catalyzes the condensation of pantoate with beta-alanine in an ATP-dependent reaction via a pantoyl-adenylate intermediate. This Wigglesworthia glossinidia brevipalpis protein is Pantothenate synthetase.